We begin with the raw amino-acid sequence, 445 residues long: Argininosuccinate synthase (445 aa).

ATP is bound by residues 17-25 (AFSGGLDTS) and Ala43. Residue Tyr99 coordinates L-citrulline. The ATP site is built by Gly129 and Thr131. 3 residues coordinate L-aspartate: Thr131, Asn135, and Asp136. Asn135 lines the L-citrulline pocket. Asp136 contributes to the ATP binding site. The L-citrulline site is built by Arg139 and Ser192. Residue Asp194 participates in ATP binding. 3 residues coordinate L-citrulline: Thr201, Glu203, and Glu280.

Belongs to the argininosuccinate synthase family. Type 2 subfamily. In terms of assembly, homotetramer.

It localises to the cytoplasm. It catalyses the reaction L-citrulline + L-aspartate + ATP = 2-(N(omega)-L-arginino)succinate + AMP + diphosphate + H(+). Its pathway is amino-acid biosynthesis; L-arginine biosynthesis; L-arginine from L-ornithine and carbamoyl phosphate: step 2/3. This chain is Argininosuccinate synthase, found in Gemmatimonas aurantiaca (strain DSM 14586 / JCM 11422 / NBRC 100505 / T-27).